The chain runs to 87 residues: Small ribosomal subunit protein uS17 (87 aa).

Belongs to the universal ribosomal protein uS17 family. As to quaternary structure, part of the 30S ribosomal subunit.

Its function is as follows. One of the primary rRNA binding proteins, it binds specifically to the 5'-end of 16S ribosomal RNA. This is Small ribosomal subunit protein uS17 from Hydrogenovibrio crunogenus (strain DSM 25203 / XCL-2) (Thiomicrospira crunogena).